The following is a 321-amino-acid chain: MPSLTALASLLALVPSALAGWNVNSKQNIAVYWGQNSANSQSTQQRLSFYCNDANINVIDIAFLNGITPPMTNFANAGDRCTPFSDNPWLLQCPEIEADIKTCQANGKTILLSLGGDSYTQGGWSSTGAAQSAADQVWAMFGPVQSGSSVHRPFGSAVVDGFDFDFEATTNNLAAFGAQLKSRTNAAGGKKYYFSAAPQCFFPDAAVGALINAVPMDWIQIQFYNNPCGVSGFTPGTSTQNNYNYQTWENWAKTSPNPNVKLLVGIPAGPGAGRGYVSGSQLTSVFQYSKGFSTFAGAMMWDMSQLYQNTGFETQVVNALR.

A signal peptide spans 1 to 19; sequence MPSLTALASLLALVPSALA. In terms of domain architecture, GH18 spans 27–321; the sequence is QNIAVYWGQN…FETQVVNALR (295 aa). The active-site Proton donor is the glutamate 167.

Belongs to the glycosyl hydrolase 18 family. Chitinase class III subfamily. Monomer.

It is found in the secreted. It catalyses the reaction Random endo-hydrolysis of N-acetyl-beta-D-glucosaminide (1-&gt;4)-beta-linkages in chitin and chitodextrins.. In terms of biological role, secreted chitinase involved in the degradation of chitin, a component of the cell walls of fungi and exoskeletal elements of some animals (including worms and arthropods). Plays a morphogenetic role during apical growth, cell division and differentiation (cell wall morphogenesis). May be involved in the degradation and further assimilation of phytopathogenic fungi, namely mycoparasitism, the major mechanism accounting for the antagonistic activity against phytopathogenic fungi displayed by Trichoderma. The sequence is that of Endochitinase 33 (chit33) from Trichoderma harzianum (Hypocrea lixii).